Reading from the N-terminus, the 339-residue chain is MSASGLPFDDFRELIRNLPGPDLGAERAVREREVTLTKPAGSLGRLEEIVAWLATWTGKRTPQVNRPLVAVFAGNHGVTAKNITPFPPSVTAQMVENFAAGGAAINQICIANDLGLKVFDLALEHPTGDITEEAAMDERTCAATMAFGMEAIAGGTDLLCIGEMGIGNTTIAAAIALALFGGTAEDWVGPGTGSTGELMQRKLAAVRQAVALHQPHLQDPLEVLRCLGGREIAAMAGAILAARMEKIPVIVDGFVASAAAAVLYAANPEAIDHCMFGQVSAEPGHRKLLAKMGKEPLLDLGMRLGEGTGAALAANIVKAAALCHSGMATFEQAGVSASK.

Glutamate 306 acts as the Proton acceptor in catalysis.

It belongs to the CobT family.

It carries out the reaction 5,6-dimethylbenzimidazole + nicotinate beta-D-ribonucleotide = alpha-ribazole 5'-phosphate + nicotinate + H(+). The protein operates within nucleoside biosynthesis; alpha-ribazole biosynthesis; alpha-ribazole from 5,6-dimethylbenzimidazole: step 1/2. Catalyzes the synthesis of alpha-ribazole-5'-phosphate from nicotinate mononucleotide (NAMN) and 5,6-dimethylbenzimidazole (DMB). The sequence is that of Nicotinate-nucleotide--dimethylbenzimidazole phosphoribosyltransferase from Brucella melitensis biotype 2 (strain ATCC 23457).